Here is a 95-residue protein sequence, read N- to C-terminus: Probable FAD-linked sulfhydryl oxidase OPG072 (95 aa).

Over 1-8 (MNPKHWGR) the chain is Intravirion. Residues 1-95 (MNPKHWGRAV…AIDVSKVKPL (95 aa)) enclose the ERV/ALR sulfhydryl oxidase domain. Residues 9–25 (AVWTIIFIVLSQAGLDG) traverse the membrane as a helical segment. The Virion surface portion of the chain corresponds to 26-95 (NIEACKRKLY…AIDVSKVKPL (70 aa)). Cys43 and Cys46 form a disulfide bridge.

It belongs to the orthopoxvirus OPG072 family. In terms of assembly, interacts with OPG128; this interaction involves formation of a transient disulfide-bonded intermediate, allowing disulfide bond transfer. The cofactor is FAD.

It is found in the virion membrane. The protein localises to the host cytoplasm. The enzyme catalyses 2 R'C(R)SH + O2 = R'C(R)S-S(R)CR' + H2O2. In terms of biological role, FAD-dependent sulfhydryl oxidase that catalyzes disulfide bond formation. The complete pathway for formation of disulfide bonds in intracellular virion membrane proteins sequentially involves thiol-disulfide transfer between OPG072, OPG128 and OPG088. This chain is Probable FAD-linked sulfhydryl oxidase OPG072 (OPG072), found in Vaccinia virus (strain Copenhagen) (VACV).